We begin with the raw amino-acid sequence, 122 residues long: Large ribosomal subunit protein uL18 (122 aa).

The protein belongs to the universal ribosomal protein uL18 family. In terms of assembly, part of the 50S ribosomal subunit; part of the 5S rRNA/L5/L18/L25 subcomplex. Contacts the 5S and 23S rRNAs.

Its function is as follows. This is one of the proteins that bind and probably mediate the attachment of the 5S RNA into the large ribosomal subunit, where it forms part of the central protuberance. The polypeptide is Large ribosomal subunit protein uL18 (Lachnospira eligens (strain ATCC 27750 / DSM 3376 / VPI C15-48 / C15-B4) (Eubacterium eligens)).